A 410-amino-acid polypeptide reads, in one-letter code: Chitin deacetylase 3 (410 aa).

Residues 1 to 18 form the signal peptide; that stretch reads MYGHLSLSTLSLLAVVAA. Positions 19-39 are excised as a propeptide; that stretch reads APFHESWLQPRDSDVSQLFRR. Residues Asn61 and Asn80 are each glycosylated (N-linked (GlcNAc...) asparagine). The 191-residue stretch at 124–314 folds into the NodB homology domain; that stretch reads KVWALSFDDG…KAVANGWSVK (191 aa). Asp131 (proton acceptor) is an active-site residue. Asp131 contributes to the acetate binding site. Asp132 is a binding site for Co(2+). The N-linked (GlcNAc...) asparagine glycan is linked to Asn149. His183 and His187 together coordinate Co(2+). Tyr225 contacts acetate. Residue Asn279 is glycosylated (N-linked (GlcNAc...) asparagine). The active-site Proton donor is the His289. An N-linked (GlcNAc...) asparagine glycan is attached at Asn293. Residue Ser385 is the site of GPI-anchor amidated serine attachment. Positions 386-410 are cleaved as a propeptide — removed in mature form; that stretch reads SSWPIANRPSLFVIACGLALAAIMV.

It belongs to the polysaccharide deacetylase family. Co(2+) is required as a cofactor.

The protein localises to the cell membrane. It carries out the reaction [(1-&gt;4)-N-acetyl-beta-D-glucosaminyl](n) + n H2O = chitosan + n acetate. Its function is as follows. Hydrolyzes the N-acetamido groups of N-acetyl-D-glucosamine residues in chitin to form chitosan and acetate. Chitosan is required to anchor melanin to the cell wall, for maintenance of cell wall integrity, and for proper cytokinesis. Chitosan offers an advantage during infection as it is less readily detected than chitin by host immunosurveillance mechanisms. In Cryptococcus neoformans var. neoformans serotype D (strain B-3501A) (Filobasidiella neoformans), this protein is Chitin deacetylase 3.